Here is a 396-residue protein sequence, read N- to C-terminus: Metallophosphoesterase 1 (396 aa).

Residues Ile-27–Phe-47 traverse the membrane as a helical segment. A divalent metal cation contacts are provided by Asp-77, Asp-119, Asn-157, His-249, His-303, and His-305. The helical transmembrane segment at Val-356–Leu-376 threads the bilayer. The short motif at Lys-392–Arg-396 is the Di-lysine motif element.

The protein belongs to the metallophosphoesterase superfamily. MPPE1 family. In terms of assembly, interacts with GPI-anchor proteins (via the GPI portion). Interacts with TMED10. Requires Mn(2+) as cofactor.

Its subcellular location is the endoplasmic reticulum-Golgi intermediate compartment membrane. In terms of biological role, metallophosphoesterase that catalyzes the removal of a side-chain ethanolamine-phosphate (EtNP) from the second mannose of the GPI-anchor protein intermediate. Participates in the glycan remodeling steps of GPI-anchor maturation to allow an efficient transport of GPI-anchor proteins from the endoplasmic reticulum to the Golgi. The protein is Metallophosphoesterase 1 of Macaca fascicularis (Crab-eating macaque).